Consider the following 1035-residue polypeptide: Kinesin-like protein KIN-4A (1035 aa).

In terms of domain architecture, Kinesin motor spans 10-369; that stretch reads CVKVAVHVRP…LKYANRARNI (360 aa). 89 to 96 serves as a coordination point for ATP; it reads GQTGSGKT. Coiled coils occupy residues 380 to 437 and 498 to 702; these read VADE…LRNH and MLQD…RKSS. Disordered stretches follow at residues 697 to 720, 766 to 787, and 882 to 928; these read EARK…HMTE, VMSG…NTLS, and HSES…PLSP. 2 stretches are compositionally biased toward polar residues: residues 704–716 and 778–787; these read RDNS…SPGS and NGNSRANTLS. Residues 850 to 904 adopt a coiled-coil conformation; the sequence is NVAADARCQVREKEMEIKEMKEQMTELVTILRHSESRRRETEKQLKQREQAAVTA. Positions 882–898 are enriched in basic and acidic residues; that stretch reads HSESRRRETEKQLKQRE. Residues 902–926 are compositionally biased toward polar residues; the sequence is VTATTSPGNGNGSVKHSADDSNTPL. Residues 971–987 carry the Nuclear localization signal motif; the sequence is KKVSIAGQSGKLWRWKR. Residues 1014-1035 are disordered; sequence DETMTRTRPRPQLLPHRPQRVM.

Belongs to the TRAFAC class myosin-kinesin ATPase superfamily. Kinesin family. KIN-4 subfamily. Homodimer. Expressed in young tissues with cell divisions, including initiating adventitious roots, primary root tips, flower primordia, intercalary meristems, sub-epidermal regions of young culms and panicles.

It localises to the nucleus. Its subcellular location is the cytoplasm. The protein resides in the cytoskeleton. With respect to regulation, may be regulated by cyclin-dependent kinase A. Its function is as follows. Microtubule-dependent motor protein involved in the control of the oriented deposition of cellulose microfibrils. Involved in wall biogenesis and modification, and contributes to cell-cycle progression and cell division. Acts as a transcriptional activator in gibberellic acid (GA) biosynthesis pathway. Binds specifically to the DNA sequence 5'-ACCAACTTGAA-3' of the ent-kaurene oxidase 2 (CYP701A6 or OsKO2) promoter. May regulate CYP701A6 gene expression and mediates cell elongation by regulating the GA biosynthesis pathway. The chain is Kinesin-like protein KIN-4A from Oryza sativa subsp. japonica (Rice).